We begin with the raw amino-acid sequence, 152 residues long: Deoxyuridine 5'-triphosphate nucleotidohydrolase (152 aa).

Residues 71-73 (RSG), asparagine 84, 88-90 (LID), and methionine 98 contribute to the substrate site.

The protein belongs to the dUTPase family. It depends on Mg(2+) as a cofactor.

It catalyses the reaction dUTP + H2O = dUMP + diphosphate + H(+). It participates in pyrimidine metabolism; dUMP biosynthesis; dUMP from dCTP (dUTP route): step 2/2. Its function is as follows. This enzyme is involved in nucleotide metabolism: it produces dUMP, the immediate precursor of thymidine nucleotides and it decreases the intracellular concentration of dUTP so that uracil cannot be incorporated into DNA. This is Deoxyuridine 5'-triphosphate nucleotidohydrolase from Photorhabdus laumondii subsp. laumondii (strain DSM 15139 / CIP 105565 / TT01) (Photorhabdus luminescens subsp. laumondii).